We begin with the raw amino-acid sequence, 776 residues long: U3 small nucleolar RNA-associated protein 4 (776 aa).

6 WD repeats span residues 35–40 (RCRFVD), 132–169 (LPLRNYDCNSGVIWSISINDSQDKLSVGCDNGTVVLID), 178–214 (EHDTILMRQEARVLTLAWKKDDFVIGGCSDGRIRIWS), 230–266 (KVDKAKKESTLVWSVIYLPRTDQIASGDSTGSIKFWD), 271–308 (TLNQSFKAHDADVLCLTTDTDNNYVFSAGVDRKIFQFS), and 417–452 (VCKLTLKDDQNISTCSLSPDGQVLVVGRPSTTKVFH).

Interacts with snoRNA U3. Interacts with MPP10. Component of the ribosomal small subunit (SSU) processome composed of at least 40 protein subunits and snoRNA U3. In the absence of snoRNA3, forms a complex with other t-UTPs. This complex can associate with pre-18S ribosomal RNAs.

Its subcellular location is the nucleus. It localises to the nucleolus. Its function is as follows. Involved in nucleolar processing of pre-18S ribosomal RNA. Required for optimal pre-ribosomal RNA transcription by RNA polymerase I together with a subset of U3 proteins required for transcription (t-UTPs). The chain is U3 small nucleolar RNA-associated protein 4 (UTP4) from Saccharomyces cerevisiae (strain ATCC 204508 / S288c) (Baker's yeast).